A 180-amino-acid chain; its full sequence is Trichosurin (180 aa).

The signal sequence occupies residues 1–15 (MKLLLLSMGLALVCG). N67 and N148 each carry an N-linked (GlcNAc...) asparagine glycan. A disulfide bridge connects residues C87 and C180.

This sequence belongs to the calycin superfamily. Lipocalin family. As to quaternary structure, homodimer. Milk.

It localises to the secreted. This is Trichosurin from Trichosurus vulpecula (Brush-tailed possum).